The following is a 504-amino-acid chain: MADIEMSEASKTPVVAEEVVDPVQKANEASLLTFADLKKNIGLIDKGVDTKEMRFIISVLRQTQSIRKKLNYKVLNQIVNFAFSHQNHATKKNFLLSFLKSDGSSMDIDSTTQAEKETTPSSSSSHLNIEVESYIHLLVLIYLIDQKKYEDATKCSSALMETVQSNTRITLYPLSSKIFFYYSLSYEMTNNLHEVRSTLLSALRTATLRHNDEGQATIINLLLRNYLEYNLFEQADKLLANTQFPESASSNQFARYFYYQGRIRAIQLEYAESFKFLTQAIRKAPQNTAGGFRRTVYKLLSIVQLLMGEIPERNTFSQKQLKIALKPYFHLTEAVRVGDLGSFNQALEQNSDIFKSDQTFTLVQRLRSNVIKAGLKKLNTAYSRISFNDICTKLKFDGTTQDIMFIIAKTIKDGVIDATINYEGGYLQSRENIDAYSTQEPLHAFSNRIDICLKIHNDSLKAMRFHPDLNKAETEKIAEVAKTIKEEMERQAEESSDNEGDSDF.

The 181-residue stretch at 254-434 (ARYFYYQGRI…GYLQSRENID (181 aa)) folds into the PCI domain. Residues 485–504 (KEEMERQAEESSDNEGDSDF) are disordered. Over residues 494 to 504 (ESSDNEGDSDF) the composition is skewed to acidic residues.

This sequence belongs to the proteasome subunit S3 family. As to quaternary structure, the 26S proteasome is composed of a core protease, known as the 20S proteasome, capped at one or both ends by the 19S regulatory complex (RC). The RC is composed of at least 18 different subunits in two subcomplexes, the base and the lid, which form the portions proximal and distal to the 20S proteolytic core, respectively.

Acts as a regulatory subunit of the 26 proteasome which is involved in the ATP-dependent degradation of ubiquitinated proteins. In Dictyostelium discoideum (Social amoeba), this protein is 26S proteasome non-ATPase regulatory subunit 3 (psmD3).